A 493-amino-acid chain; its full sequence is Chitobiosyldiphosphodolichol beta-mannosyltransferase (493 aa).

Over 1-71 the chain is Lumenal; sequence MNRVAVVVLG…PISMSNSFKK (71 aa). Residues 72–92 traverse the membrane as a helical segment; that stretch reads IPLISIFMWPLLAICKVLFQI. The Cytoplasmic portion of the chain corresponds to 93–109; sequence IQLMYVLLVKVPSPLNT. Positions 110–130 form an intramembrane region, helical; that stretch reads ILVQSPPAIPTIFVMQIVCWI. At 131 to 493 the chain is on the cytoplasmic side; it reads RGVHLVIDWH…SSSNSKSKKD (363 aa). A disordered region spans residues 462–493; it reads FIPSSSSSSSSSSSSSSSSSSSSSSNSKSKKD. Residues 465–493 are compositionally biased toward low complexity; it reads SSSSSSSSSSSSSSSSSSSSSSNSKSKKD.

Belongs to the glycosyltransferase group 1 family. Glycosyltransferase 33 subfamily.

The protein localises to the endoplasmic reticulum membrane. It catalyses the reaction an N,N'-diacetylchitobiosyl-diphospho-di-trans,poly-cis-dolichol + GDP-alpha-D-mannose = a beta-D-Man-(1-&gt;4)-beta-D-GlcNAc-(1-&gt;4)-alpha-D-GlcNAc-diphospho-di-trans,poly-cis-dolichol + GDP + H(+). It participates in protein modification; protein glycosylation. Its function is as follows. Participates in the formation of the lipid-linked precursor oligosaccharide for N-glycosylation. Involved in assembling the dolichol-pyrophosphate-GlcNAc(2)-Man(5) intermediate on the cytoplasmic surface of the ER. In Dictyostelium discoideum (Social amoeba), this protein is Chitobiosyldiphosphodolichol beta-mannosyltransferase (alg1).